A 629-amino-acid chain; its full sequence is Forkhead box protein O1-B (629 aa).

Disordered regions lie at residues M1 to G54, C88 to N134, S211 to L308, and K359 to V397. Over residues Q36–A46 the composition is skewed to polar residues. 2 stretches are compositionally biased toward low complexity: residues H90–Q107 and P115–R133. Residues W136–A230 constitute a DNA-binding region (fork-head). The span at T240–M251 shows a compositional bias: basic residues. Composition is skewed to polar residues over residues T291–G302, K359–M377, and S385–V397.

It is found in the cytoplasm. Its subcellular location is the nucleus. Functionally, transcription factor that regulates metabolic homeostasis in response to oxidative stress. Binds to the consensus sequence 5'-TT[G/A]TTTTG-3' and the related Daf-16 family binding element (DBE) with consensus sequence 5'-TT[G/A]TTTAC-3'. Main regulator of redox balance and osteoblast numbers and controls bone mass. Orchestrates the endocrine function of the skeleton in regulating glucose metabolism. May act as a positive regulator of apoptosis in cardiac smooth muscle cells as a result of its transcriptional activation of pro-apoptotic genes. This chain is Forkhead box protein O1-B (foxo1b), found in Danio rerio (Zebrafish).